Consider the following 320-residue polypeptide: Cytochrome f (320 aa).

A signal peptide spans 1–35; it reads MQTINTFSWIKEQITRSISISLILYIITRSSIANA. Residues Tyr-36, Cys-56, Cys-59, and His-60 each coordinate heme. Residues 286-305 form a helical membrane-spanning segment; it reads IQGLLFFFASVILAQIFLVL.

This sequence belongs to the cytochrome f family. As to quaternary structure, the 4 large subunits of the cytochrome b6-f complex are cytochrome b6, subunit IV (17 kDa polypeptide, petD), cytochrome f and the Rieske protein, while the 4 small subunits are PetG, PetL, PetM and PetN. The complex functions as a dimer. The cofactor is heme.

The protein resides in the plastid. The protein localises to the chloroplast thylakoid membrane. Component of the cytochrome b6-f complex, which mediates electron transfer between photosystem II (PSII) and photosystem I (PSI), cyclic electron flow around PSI, and state transitions. This is Cytochrome f (petA) from Spinacia oleracea (Spinach).